A 141-amino-acid polypeptide reads, in one-letter code: Hemoglobin subunit alpha (141 aa).

In terms of domain architecture, Globin spans 1–141 (VLSATDKANV…VATVLTSKYR (141 aa)). Position 3 is a phosphoserine (S3). N6-succinyllysine is present on residues K7 and K11. At K16 the chain carries N6-acetyllysine; alternate. K16 carries the N6-succinyllysine; alternate modification. Y24 carries the phosphotyrosine modification. K40 carries the post-translational modification N6-succinyllysine. H58 contributes to the O2 binding site. H87 is a binding site for heme b. Residue S102 is modified to Phosphoserine. Residue T108 is modified to Phosphothreonine. S124 carries the phosphoserine modification. Phosphothreonine is present on residues T134 and T137. Phosphoserine is present on S138.

Belongs to the globin family. In terms of assembly, heterotetramer of two alpha chains and two beta chains. In terms of tissue distribution, red blood cells.

In terms of biological role, involved in oxygen transport from the lung to the various peripheral tissues. Functionally, hemopressin acts as an antagonist peptide of the cannabinoid receptor CNR1. Hemopressin-binding efficiently blocks cannabinoid receptor CNR1 and subsequent signaling. In Erinaceus europaeus (Western European hedgehog), this protein is Hemoglobin subunit alpha (HBA).